A 375-amino-acid chain; its full sequence is Alanine racemase, catabolic (375 aa).

Residue Lys-38 is the Proton acceptor; specific for D-alanine of the active site. An N6-(pyridoxal phosphate)lysine modification is found at Lys-38. The Proton acceptor; specific for L-alanine role is filled by Tyr-269.

This sequence belongs to the alanine racemase family. It depends on pyridoxal 5'-phosphate as a cofactor.

The catalysed reaction is L-alanine = D-alanine. The protein operates within amino-acid biosynthesis; D-alanine biosynthesis; D-alanine from L-alanine: step 1/1. This Schizosaccharomyces pombe (strain 972 / ATCC 24843) (Fission yeast) protein is Alanine racemase, catabolic (alr1).